The sequence spans 159 residues: Phosphopantetheine adenylyltransferase (159 aa).

Residue His16 coordinates ATP. The substrate site is built by Lys40, Met72, and Arg86. Residues 87 to 89 (GLR), Glu97, and 122 to 128 (YQYLSAS) contribute to the ATP site.

This sequence belongs to the bacterial CoaD family. As to quaternary structure, homohexamer. Mg(2+) is required as a cofactor.

It localises to the cytoplasm. The enzyme catalyses (R)-4'-phosphopantetheine + ATP + H(+) = 3'-dephospho-CoA + diphosphate. The protein operates within cofactor biosynthesis; coenzyme A biosynthesis; CoA from (R)-pantothenate: step 4/5. In terms of biological role, reversibly transfers an adenylyl group from ATP to 4'-phosphopantetheine, yielding dephospho-CoA (dPCoA) and pyrophosphate. The protein is Phosphopantetheine adenylyltransferase of Dehalococcoides mccartyi (strain ATCC BAA-2100 / JCM 16839 / KCTC 5957 / BAV1).